A 662-amino-acid polypeptide reads, in one-letter code: UPF0313 protein CPE1196 (662 aa).

Residues A296–K567 enclose the Radical SAM core domain. Residues C310, C314, and C317 each coordinate [4Fe-4S] cluster. Positions R597 to R662 are disordered. Residues N618 to K632 are compositionally biased toward basic and acidic residues. Over residues R633–K644 the composition is skewed to basic residues.

This sequence belongs to the UPF0313 family. It depends on [4Fe-4S] cluster as a cofactor.

This chain is UPF0313 protein CPE1196, found in Clostridium perfringens (strain 13 / Type A).